Here is a 295-residue protein sequence, read N- to C-terminus: Iodotyrosine deiodinase (295 aa).

The chain crosses the membrane as a helical span at residues 3–23 (VFSSLTPVFVAVLCVIIGFLF). The tract at residues 29–81 (KESRSKQKPSDQTARPWVDEDLQDDTEISTKDNEENNEDWMDTTDEENLPHVP) is disordered. Over residues 63-75 (ENNEDWMDTTDEE) the composition is skewed to acidic residues. FMN is bound by residues 106–110 (RRSVR), serine 134, and 134–135 (SG). 4 residues coordinate 3-iodo-L-tyrosine: alanine 136, glutamate 163, tyrosine 167, and lysine 188. FMN-binding positions include 243–245 (TTT) and arginine 285.

This sequence belongs to the nitroreductase family. It depends on FMN as a cofactor.

The protein localises to the membrane. The catalysed reaction is 2 iodide + L-tyrosine + 2 NADP(+) = 3,5-diiodo-L-tyrosine + 2 NADPH + H(+). It carries out the reaction iodide + L-tyrosine + NADP(+) = 3-iodo-L-tyrosine + NADPH. The enzyme catalyses 3-iodo-L-tyrosine + iodide + NADP(+) = 3,5-diiodo-L-tyrosine + NADPH + H(+). It catalyses the reaction L-tyrosine + chloride + NADP(+) = 3-chloro-L-tyrosine + NADPH. The catalysed reaction is bromide + L-tyrosine + NADP(+) = 3-bromo-L-tyrosine + NADPH. Functionally, catalyzes the dehalogenation of halotyrosines such as 3,5-diiodo-L-tyrosine. Likely to also catalyze the dehalogenation of other halotyrosines such as 3-bromo-L-tyrosine, 3-chloro-L-tyrosine and 3-iodo-L-tyrosine. This is Iodotyrosine deiodinase (iyd) from Danio rerio (Zebrafish).